A 525-amino-acid polypeptide reads, in one-letter code: MELGPEPPHRRRLLFTCSPTPAPQPTGKVQFGASRAGGLSPVTNLTVTMDQLEGLGSDYEKPMDVRNSSSLQRMGSSESTDSGFCLDSPGPLDSKENLEISLRRINCLPQKLLGCSPALKRSHSDSLDHDIFQLIDQDENKENEAFEFKKPIRPASRGCLNAHVHEESKDPFTHRQNSAPARMLSSNESDISESGNFSPLFTPQSPVKASLSDEDDGFIDLLDGENLKNDEETPSCMSSLWTAPLVMRRPTNLADRCGLFDSPSPCSSTSSCSTRAVKRADRSHEESPRGTKRRKSSEASPVKADVPEPTQLPHQSLSLTSFPKGTIENIFHSDPRDLIGDFSKGYLFHTVSGKHQDLKYISPEIMASVLNGKFANLIKEFVIIDCRYPYEYEGGHIKGAVNLHMEEEVEEFLLKKPIVPADGKRVIVVFHCEFSSERGPRMCRYVRERDRLGNEYPKLHYPELYVLKGGYKEFFLKCQSHCEPPSYRPMHHEDFKEDLKKFRTKSRTWAGEKSKREMYSRLKKL.

The disordered stretch occupies residues 1–42 (MELGPEPPHRRRLLFTCSPTPAPQPTGKVQFGASRAGGLSPV). The Phosphodegron signature appears at 74–84 (MGSSESTDSGF). Ser76 bears the Phosphoserine; by CHEK1 mark. A phosphoserine; by NEK11 mark is found at Ser79, Ser82, and Ser88. At Ser124 the chain carries Phosphoserine; by CHEK1 and CHEK2. Positions 141–143 (KEN) match the KEN box motif. Ser178 carries the phosphoserine; by CHEK1 modification. Residues 260-318 (FDSPSPCSSTSSCSTRAVKRADRSHEESPRGTKRRKSSEASPVKADVPEPTQLPHQSLS) form a disordered region. A compositionally biased stretch (low complexity) spans 262 to 274 (SPSPCSSTSSCST). Residues 278–289 (KRADRSHEESPR) are compositionally biased toward basic and acidic residues. A phosphoserine; by CHEK1 and CHEK2 mark is found at Ser283 and Ser296. The region spanning 377-483 (LIKEFVIIDC…FFLKCQSHCE (107 aa)) is the Rhodanese domain. The active site involves Cys432. Thr508 carries the phosphothreonine; by CHEK1 modification. Residues Ser514 and Ser520 each carry the phosphoserine; by PLK3 modification.

The protein belongs to the MPI phosphatase family. Interacts with CCNB1/cyclin B1. Interacts with YWHAE/14-3-3 epsilon when phosphorylated. Interacts with CUL1 specifically when CUL1 is neddylated and active. Interacts with BTRC/BTRCP1 and FBXW11/BTRCP2. Interactions with CUL1, BTRC and FBXW11 are enhanced upon DNA damage. Interacts with CHEK2; mediates CDC25A phosphorylation and degradation in response to infrared-induced DNA damages. Interacts with HSP90AB1; prevents heat shock-mediated CDC25A degradation and contributes to cell cycle progression. Post-translationally, phosphorylated by CHEK1 on Ser-76, Ser-124, Ser-178, Ser-283, Ser-296 and Thr-508 during checkpoint mediated cell cycle arrest. Also phosphorylated by CHEK2 on Ser-124, Ser-283, and Ser-296 during checkpoint mediated cell cycle arrest. Phosphorylation on Ser-178 and Thr-508 creates binding sites for YWHAE/14-3-3 epsilon which inhibits CDC25A. Phosphorylation on Ser-76, Ser-124, Ser-178, Ser-283 and Ser-296 may also promote ubiquitin-dependent proteolysis of CDC25A by the SCF complex. Phosphorylation of CDC25A at Ser-76 by CHEK1 primes it for subsequent phosphorylation at Ser-79, Ser-82 and Ser-88 by NEK11. Phosphorylation by NEK11 is required for BTRC-mediated polyubiquitination and degradation. Phosphorylation by PIM1 leads to an increase in phosphatase activity. Phosphorylated by PLK3 following DNA damage, leading to promote its ubiquitination and degradation. In terms of processing, ubiquitinated by the anaphase promoting complex/cyclosome (APC/C) ubiquitin ligase complex that contains FZR1/CDH1 during G1 phase leading to its degradation by the proteasome. Ubiquitinated by a SCF complex containing BTRC and FBXW11 during S phase leading to its degradation by the proteasome. Deubiquitination by USP17L2/DUB3 leads to its stabilization.

It carries out the reaction O-phospho-L-tyrosyl-[protein] + H2O = L-tyrosyl-[protein] + phosphate. With respect to regulation, stimulated by B-type cyclins. Stimulated by PIM1-mediated phosphorylation. Functionally, tyrosine protein phosphatase which functions as a dosage-dependent inducer of mitotic progression. Directly dephosphorylates CDK1 and stimulates its kinase activity. Also dephosphorylates CDK2 in complex with cyclin-E, in vitro. This chain is M-phase inducer phosphatase 1 (Cdc25a), found in Rattus norvegicus (Rat).